The chain runs to 361 residues: GDP-mannose 4,6 dehydratase 1 (361 aa).

Residues 23–28 (GITGQD), 79–80 (DL), 101–105 (LAAQS), and Y116 contribute to the NADP(+) site. The active site involves S150. Catalysis depends on nucleophile residues E152 and Y173. NADP(+)-binding residues include K177, H203, and R208.

It belongs to the NAD(P)-dependent epimerase/dehydratase family. GDP-mannose 4,6-dehydratase subfamily. As to quaternary structure, homotetramer. Requires NADP(+) as cofactor. As to expression, expressed in roots,stipules and pollen just before anthesis. Primarily localized to the root meristem and columella root cap. Not expressed in emerging lateral roots.

It catalyses the reaction GDP-alpha-D-mannose = GDP-4-dehydro-alpha-D-rhamnose + H2O. Its pathway is nucleotide-sugar biosynthesis; GDP-L-fucose biosynthesis via de novo pathway; GDP-L-fucose from GDP-alpha-D-mannose: step 1/2. Its function is as follows. Catalyzes the conversion of GDP-D-mannose to GDP-4-dehydro-6-deoxy-D-mannose. The polypeptide is GDP-mannose 4,6 dehydratase 1 (GMD1) (Arabidopsis thaliana (Mouse-ear cress)).